The following is a 344-amino-acid chain: Dihydroorotate dehydrogenase (quinone) (344 aa).

Residues 62-66 (AGLDK) and T86 contribute to the FMN site. K66 contributes to the substrate binding site. Substrate is bound at residue 111 to 115 (NRMGF). The FMN site is built by N139 and N172. Residue N172 coordinates substrate. S175 functions as the Nucleophile in the catalytic mechanism. N177 is a substrate binding site. FMN-binding residues include K217 and T245. 246–247 (NT) contributes to the substrate binding site. Residues G268, G297, and 318–319 (YS) contribute to the FMN site.

The protein belongs to the dihydroorotate dehydrogenase family. Type 2 subfamily. As to quaternary structure, monomer. It depends on FMN as a cofactor.

It localises to the cell membrane. It catalyses the reaction (S)-dihydroorotate + a quinone = orotate + a quinol. It participates in pyrimidine metabolism; UMP biosynthesis via de novo pathway; orotate from (S)-dihydroorotate (quinone route): step 1/1. In terms of biological role, catalyzes the conversion of dihydroorotate to orotate with quinone as electron acceptor. The protein is Dihydroorotate dehydrogenase (quinone) of Chromobacterium violaceum (strain ATCC 12472 / DSM 30191 / JCM 1249 / CCUG 213 / NBRC 12614 / NCIMB 9131 / NCTC 9757 / MK).